Here is a 94-residue protein sequence, read N- to C-terminus: Surfactant-associated protein 3 (94 aa).

In terms of tissue distribution, found in lung alveolar cells type I and II, as well as alveolar macrophages (at protein level). Detected also in testis and kidney. Expressed by different tissues of the ocular system like cornea, conjuctiva, lacrimal gland, eyelid and efferent tear ducts (at protein level). From these tissues is secreted into the tear film (at protein level).

It localises to the cytoplasm. The protein localises to the secreted. Its function is as follows. Putative surfactant protein. May be involved in wound healing and in the reduction of the surface tension at the ocular surface. The polypeptide is Surfactant-associated protein 3 (SFTA3) (Homo sapiens (Human)).